An 82-amino-acid polypeptide reads, in one-letter code: Cytochrome c-551 (82 aa).

Heme c-binding residues include Cys-12, Cys-15, His-16, and Met-61.

Post-translationally, binds 1 heme c group covalently per subunit.

Functionally, this is a prokaryotic monoheme cytochrome, unreactive with mitochondrial cytochrome C oxidase or reductase. It functions in nitrite and nitrate respiration in Pseudomonas, but it is also found in other bacteria. The protein is Cytochrome c-551 of Pseudomonas denitrificans.